A 211-amino-acid chain; its full sequence is Claudin-1 (211 aa).

The Cytoplasmic portion of the chain corresponds to 1–7 (MANAGLQ). The helical transmembrane segment at 8–28 (LLGFILASLGWIGSIVSTALP) threads the bilayer. Residues 29–81 (QWKIYSYAGDNIVTAQAIYEGLWMSCVSQSTGQIQCKVFDSLLNLNSTLQATR) lie on the Extracellular side of the membrane. Cysteine 54 and cysteine 64 are disulfide-bonded. Residues 82-102 (ALMVIGILLGLIAIFVSTIGM) traverse the membrane as a helical segment. Residues 103 to 115 (KCMRCLEDDEVQK) are Cytoplasmic-facing. A helical membrane pass occupies residues 116–136 (MWMAVIGGIIFVISGLATLVA). The Extracellular segment spans residues 137-163 (TAWYGNRIVQEFYDPMTPVNARYEFGQ). Residues 164-184 (ALFTGWAAASLCLLGGALLSC) traverse the membrane as a helical segment. The Cytoplasmic portion of the chain corresponds to 185–211 (SCPRKTTSYPTPRPYPKPTPSSGKDYV). The disordered stretch occupies residues 190-211 (TTSYPTPRPYPKPTPSSGKDYV). The interactions with TJP1, TJP2, TJP3 and PATJ stretch occupies residues 210–211 (YV).

It belongs to the claudin family. Can form homo- and heteropolymers with other CLDN. Homopolymers interact with CLDN3, but not CLDN2, homopolymers. Directly interacts with TJP1/ZO-1, TJP2/ZO-2 and TJP3/ZO-3. Interacts with MPDZ and PATJ. Interacts with OCLN, CD81, CLDN4, CLDN6 and CLDN9. As to expression, detected in epididymis (at protein level). Detected in testis and epididymis.

It localises to the cell junction. It is found in the tight junction. The protein localises to the cell membrane. Its subcellular location is the basolateral cell membrane. In terms of biological role, claudins function as major constituents of the tight junction complexes that regulate the permeability of epithelia. While some claudin family members play essential roles in the formation of impermeable barriers, others mediate the permeability to ions and small molecules. Often, several claudin family members are coexpressed and interact with each other, and this determines the overall permeability. CLDN1 is required to prevent the paracellular diffusion of small molecules through tight junctions in the epidermis and is required for the normal barrier function of the skin. Required for normal water homeostasis and to prevent excessive water loss through the skin, probably via an indirect effect on the expression levels of other proteins, since CLDN1 itself seems to be dispensable for water barrier formation in keratinocyte tight junctions. The polypeptide is Claudin-1 (Cldn1) (Rattus norvegicus (Rat)).